Reading from the N-terminus, the 259-residue chain is Type III pantothenate kinase (259 aa).

ATP is bound at residue 6–13; that stretch reads DTGNTNTV. 107-110 is a substrate binding site; sequence GPDR. D109 (proton acceptor) is an active-site residue. A K(+)-binding site is contributed by D129. T132 provides a ligand contact to ATP. T184 provides a ligand contact to substrate.

It belongs to the type III pantothenate kinase family. In terms of assembly, homodimer. The cofactor is NH4(+). Requires K(+) as cofactor.

The protein resides in the cytoplasm. It carries out the reaction (R)-pantothenate + ATP = (R)-4'-phosphopantothenate + ADP + H(+). The protein operates within cofactor biosynthesis; coenzyme A biosynthesis; CoA from (R)-pantothenate: step 1/5. In terms of biological role, catalyzes the phosphorylation of pantothenate (Pan), the first step in CoA biosynthesis. In Paracoccus denitrificans (strain Pd 1222), this protein is Type III pantothenate kinase.